A 404-amino-acid polypeptide reads, in one-letter code: Spore germination protein YndF (404 aa).

The signal sequence occupies residues methionine 1 to glycine 24. Residue cysteine 25 is the site of N-palmitoyl cysteine attachment. Cysteine 25 carries S-diacylglycerol cysteine lipidation.

It belongs to the GerABKC lipoprotein family.

The protein resides in the cell membrane. In terms of biological role, may be involved in spore germination. This is Spore germination protein YndF (yndF) from Bacillus subtilis (strain 168).